Here is a 329-residue protein sequence, read N- to C-terminus: Ig gamma-2C chain C region (329 aa).

Residues 1–97 form a CH1 region; that stretch reads ARTTAPSVYP…ATKSNLIKRI (97 aa). Cysteines 27 and 82 form a disulfide. The hinge stretch occupies residues 98–113; the sequence is EPRRPKPRPPTDICSC. Residues 114 to 222 are CH2; it reads DDNLGRPSVF…PIEKTISKPR (109 aa). 2 cysteine pairs are disulfide-bonded: Cys143–Cys203 and Cys249–Cys307. A CH3 region spans residues 223 to 329; it reads GKARTPQVYT…QKNLSRSPGK (107 aa).

The sequence is that of Ig gamma-2C chain C region from Rattus norvegicus (Rat).